The chain runs to 665 residues: F-box/WD repeat-containing protein lin-23 (665 aa).

The region spanning 81–127 (RDFISNLPAHLVELILFNVNSDSLKSCEEVSTSWRCALARGQHWKKL) is the F-box domain. WD repeat units follow at residues 220–257 (ENSKGVYCLQYDDDKIVSGLRDNTIKIWDRKDYSCSRI), 260–299 (GHTGSVLCLQYDNRVIISGSSDATVRVWDVETGECIKTLI), 301–337 (HCEAVLHLRFANGIMVTCSKDRSIAVWDMVSPRDITI), 343–380 (GHRAAVNVVDFDDRYIVSASGDRTIKVWSMDTLEFVRT), 383–420 (GHRRGIACLQYRGRLVVSGSSDNTIRLWDIHSGVCLRV), 423–460 (GHEELVRCIRFDEKRIVSGAYDGKIKVWDLQAALDPRA), and 472–509 (QHTGRVFRLQFDDFQIVSSSHDDTILIWDFLDAPPSGL). Residues 574 to 665 (AAAEAARGAG…VDEEMPDGGP (92 aa)) form a disordered region. 2 stretches are compositionally biased toward acidic residues: residues 584-595 (DNDESSSEEDLD) and 655-665 (DVDEEMPDGGP).

As to quaternary structure, part of a SCF (SKP1-cullin-F-box) protein ligase complex.

The protein resides in the cytoplasm. In terms of biological role, functions cell autonomously to negatively regulate cell cycle progression. Required to restrain cell proliferation in response to developmental cues. Probably recognizes and binds to some proteins and promotes their ubiquitination and degradation. The sequence is that of F-box/WD repeat-containing protein lin-23 (lin-23) from Caenorhabditis elegans.